A 361-amino-acid chain; its full sequence is RLA class I histocompatibility antigen, alpha chain 11/11 (361 aa).

The N-terminal stretch at Met-1–Ala-24 is a signal peptide. Positions Gly-25–Ala-114 are alpha-1. Topologically, residues Gly-25 to Ile-308 are extracellular. Asn-110 carries N-linked (GlcNAc...) asparagine glycosylation. Residues Gly-115–Ala-206 are alpha-2. Intrachain disulfides connect Cys-125-Cys-188 and Cys-227-Cys-283. An alpha-3 region spans residues Asp-207–Trp-298. An Ig-like C1-type domain is found at Pro-209 to Thr-297. Positions Glu-299–Ile-308 are connecting peptide. A helical membrane pass occupies residues Val-309–Val-329. The Cytoplasmic portion of the chain corresponds to Arg-330–Pro-361. Positions Ser-335–Pro-361 are disordered. Phosphoserine is present on residues Ser-355 and Ser-358.

The protein belongs to the MHC class I family. As to quaternary structure, heterodimer of an alpha chain and a beta chain (beta-2-microglobulin).

Its subcellular location is the membrane. Involved in the presentation of foreign antigens to the immune system. This Oryctolagus cuniculus (Rabbit) protein is RLA class I histocompatibility antigen, alpha chain 11/11.